The chain runs to 357 residues: Geranylgeranyl pyrophosphate synthase, chloroplastic (357 aa).

The N-terminal 40 residues, 1–40, are a transit peptide targeting the chloroplast; the sequence is MRSNLCHPLKNQLPISFFLSGTIRKPIFSCSRLSISAIIT. Positions 106, 109, and 138 each coordinate isopentenyl diphosphate. Mg(2+) contacts are provided by Asp-145 and Asp-151. Arg-156 serves as a coordination point for dimethylallyl diphosphate. Arg-157 serves as a coordination point for isopentenyl diphosphate. The dimethylallyl diphosphate site is built by Lys-242, Thr-243, Gln-280, Lys-297, and Lys-307.

Belongs to the FPP/GGPP synthase family. Requires Mg(2+) as cofactor.

It is found in the plastid. The protein resides in the chloroplast. It carries out the reaction isopentenyl diphosphate + dimethylallyl diphosphate = (2E)-geranyl diphosphate + diphosphate. The catalysed reaction is isopentenyl diphosphate + (2E)-geranyl diphosphate = (2E,6E)-farnesyl diphosphate + diphosphate. It catalyses the reaction isopentenyl diphosphate + (2E,6E)-farnesyl diphosphate = (2E,6E,10E)-geranylgeranyl diphosphate + diphosphate. It participates in isoprenoid biosynthesis; farnesyl diphosphate biosynthesis; farnesyl diphosphate from geranyl diphosphate and isopentenyl diphosphate: step 1/1. It functions in the pathway isoprenoid biosynthesis; geranyl diphosphate biosynthesis; geranyl diphosphate from dimethylallyl diphosphate and isopentenyl diphosphate: step 1/1. The protein operates within isoprenoid biosynthesis; geranylgeranyl diphosphate biosynthesis; geranylgeranyl diphosphate from farnesyl diphosphate and isopentenyl diphosphate: step 1/1. Catalyzes the trans-addition of the three molecules of IPP onto DMAPP to form geranylgeranyl pyrophosphate. This chain is Geranylgeranyl pyrophosphate synthase, chloroplastic (GGPS1), found in Catharanthus roseus (Madagascar periwinkle).